We begin with the raw amino-acid sequence, 409 residues long: Terpredoxin reductase (409 aa).

7–38 (TTVIVGAGHAGTAAAFFLREFGYHGRVLLLSA) contributes to the FAD binding site. 151 to 159 (GGGFIGLEI) serves as a coordination point for NAD(+).

It depends on FAD as a cofactor.

Functionally, the oxidation of alpha-terpineol by cytochrome p450-TERP requires the participation of a flavoprotein, terpredoxin reductase, and an iron-sulfur protein, terpredoxin, to mediate the transfer of electrons from NADH to P450 for oxygen activation. The sequence is that of Terpredoxin reductase (terPA) from Pseudomonas sp.